A 58-amino-acid polypeptide reads, in one-letter code: MLSNIGFPGLILILVAILILFGPKKLPEIGRSLGETLKEFKKSTRELTDDAFQEKEKK.

A helical transmembrane segment spans residues 1-21 (MLSNIGFPGLILILVAILILF).

It belongs to the TatA/E family. As to quaternary structure, forms a complex with TatC.

Its subcellular location is the cell membrane. Functionally, part of the twin-arginine translocation (Tat) system that transports large folded proteins containing a characteristic twin-arginine motif in their signal peptide across membranes. TatA could form the protein-conducting channel of the Tat system. This Bacillus cytotoxicus (strain DSM 22905 / CIP 110041 / 391-98 / NVH 391-98) protein is Sec-independent protein translocase protein TatA.